The sequence spans 362 residues: Phosphoserine aminotransferase (362 aa).

Residues serine 9 and arginine 42 each coordinate L-glutamate. Pyridoxal 5'-phosphate is bound by residues 76–77 (GR), tryptophan 102, threonine 153, aspartate 174, and glutamine 197. Position 198 is an N6-(pyridoxal phosphate)lysine (lysine 198). Residue 239-240 (NT) participates in pyridoxal 5'-phosphate binding.

The protein belongs to the class-V pyridoxal-phosphate-dependent aminotransferase family. SerC subfamily. In terms of assembly, homodimer. Pyridoxal 5'-phosphate serves as cofactor.

The protein localises to the cytoplasm. It carries out the reaction O-phospho-L-serine + 2-oxoglutarate = 3-phosphooxypyruvate + L-glutamate. It catalyses the reaction 4-(phosphooxy)-L-threonine + 2-oxoglutarate = (R)-3-hydroxy-2-oxo-4-phosphooxybutanoate + L-glutamate. It functions in the pathway amino-acid biosynthesis; L-serine biosynthesis; L-serine from 3-phospho-D-glycerate: step 2/3. It participates in cofactor biosynthesis; pyridoxine 5'-phosphate biosynthesis; pyridoxine 5'-phosphate from D-erythrose 4-phosphate: step 3/5. Functionally, catalyzes the reversible conversion of 3-phosphohydroxypyruvate to phosphoserine and of 3-hydroxy-2-oxo-4-phosphonooxybutanoate to phosphohydroxythreonine. The sequence is that of Phosphoserine aminotransferase from Klebsiella pneumoniae (strain 342).